Here is a 547-residue protein sequence, read N- to C-terminus: Puff-specific protein Bx42 (547 aa).

An SNW region spans residues alanine 177–asparagine 343. Serine 227 and serine 235 each carry phosphoserine. Disordered regions lie at residues arginine 333–isoleucine 398 and glutamine 486–aspartate 547. 2 stretches are compositionally biased toward basic and acidic residues: residues glutamate 358 to isoleucine 398 and lysine 526 to serine 539.

Belongs to the SNW family.

Its subcellular location is the nucleus. In terms of biological role, may play a role in chromatin structure and function. This is Puff-specific protein Bx42 (Bx42) from Drosophila melanogaster (Fruit fly).